The following is a 946-amino-acid chain: Isoleucine--tRNA ligase (946 aa).

Residues 58–68 (PYANGSIHIGH) carry the 'HIGH' region motif. Residue glutamate 568 coordinates L-isoleucyl-5'-AMP. A 'KMSKS' region motif is present at residues 609–613 (KMSKS). An ATP-binding site is contributed by lysine 612. Zn(2+) is bound by residues cysteine 908, cysteine 911, cysteine 928, and cysteine 931.

This sequence belongs to the class-I aminoacyl-tRNA synthetase family. IleS type 1 subfamily. Monomer. Zn(2+) is required as a cofactor.

Its subcellular location is the cytoplasm. It carries out the reaction tRNA(Ile) + L-isoleucine + ATP = L-isoleucyl-tRNA(Ile) + AMP + diphosphate. Its function is as follows. Catalyzes the attachment of isoleucine to tRNA(Ile). As IleRS can inadvertently accommodate and process structurally similar amino acids such as valine, to avoid such errors it has two additional distinct tRNA(Ile)-dependent editing activities. One activity is designated as 'pretransfer' editing and involves the hydrolysis of activated Val-AMP. The other activity is designated 'posttransfer' editing and involves deacylation of mischarged Val-tRNA(Ile). The protein is Isoleucine--tRNA ligase of Chromohalobacter salexigens (strain ATCC BAA-138 / DSM 3043 / CIP 106854 / NCIMB 13768 / 1H11).